Consider the following 81-residue polypeptide: Sulfur carrier protein TusA (81 aa).

Cysteine 19 acts as the Cysteine persulfide intermediate in catalysis.

This sequence belongs to the sulfur carrier protein TusA family. In terms of assembly, interacts with IscS.

The protein resides in the cytoplasm. The protein operates within tRNA modification. Its function is as follows. Sulfur carrier protein involved in sulfur trafficking in the cell. Part of a sulfur-relay system required for 2-thiolation during synthesis of 2-thiouridine of the modified wobble base 5-methylaminomethyl-2-thiouridine (mnm(5)s(2)U) in tRNA. Interacts with IscS and stimulates its cysteine desulfurase activity. Accepts an activated sulfur from IscS, which is then transferred to TusD, and thus determines the direction of sulfur flow from IscS to 2-thiouridine formation. Also appears to be involved in sulfur transfer for the biosynthesis of molybdopterin. The sequence is that of Sulfur carrier protein TusA from Salmonella choleraesuis (strain SC-B67).